The chain runs to 71 residues: Small ribosomal subunit protein bS21 (71 aa).

This sequence belongs to the bacterial ribosomal protein bS21 family.

The sequence is that of Small ribosomal subunit protein bS21 from Shewanella sp. (strain MR-4).